Here is a 622-residue protein sequence, read N- to C-terminus: Probable potassium transport system protein Kup 1 (622 aa).

The next 12 membrane-spanning stretches (helical) occupy residues 11–31 (LTLGAIGVVYGDIGTSVLYAV), 50–70 (ILSIFFWTLTIIVSLKYVTLV), 101–121 (VLLLVGIFGTCLFYGDGVITP), 137–157 (PAFNKFVIPLTLLVLFGLFWV), 168–188 (FFGPITVVWFACIAVLGVAQI), 215–235 (FIILGAVVLCVTGAEALYADL), 247–267 (WFAVVMPALTLNYFGQGALLL), 285–305 (ALLPLVGLATLATVIASQALI), 337–357 (IYLPFVNWGLFVTIVLAVMIF), 366–386 (AYGIAVCTDMLITTILTFFVI), 393–413 (PLWLCVAATSFFFVVDFAFWA), and 419–439 (LFDGGWFPLLIGGAIFILMIT).

This sequence belongs to the HAK/KUP transporter (TC 2.A.72) family.

It is found in the cell inner membrane. It catalyses the reaction K(+)(in) + H(+)(in) = K(+)(out) + H(+)(out). In terms of biological role, transport of potassium into the cell. Likely operates as a K(+):H(+) symporter. The polypeptide is Probable potassium transport system protein Kup 1 (Albidiferax ferrireducens (strain ATCC BAA-621 / DSM 15236 / T118) (Rhodoferax ferrireducens)).